The primary structure comprises 406 residues: Acetate kinase (406 aa).

Asn7 is a Mg(2+) binding site. ATP is bound at residue Lys14. A substrate-binding site is contributed by Arg90. The Proton donor/acceptor role is filled by Asp147. Residues His207–Gly211, Asp283–Arg285, and Gly331–Asn335 contribute to the ATP site. Glu385 is a Mg(2+) binding site.

The protein belongs to the acetokinase family. As to quaternary structure, homodimer. The cofactor is Mg(2+). Mn(2+) is required as a cofactor.

It localises to the cytoplasm. It catalyses the reaction acetate + ATP = acetyl phosphate + ADP. The protein operates within metabolic intermediate biosynthesis; acetyl-CoA biosynthesis; acetyl-CoA from acetate: step 1/2. In terms of biological role, catalyzes the formation of acetyl phosphate from acetate and ATP. Can also catalyze the reverse reaction. The protein is Acetate kinase of Thermosipho africanus (strain TCF52B).